Consider the following 192-residue polypeptide: Signal peptidase complex catalytic subunit SEC11C (192 aa).

At 1–28 the chain is on the cytoplasmic side; it reads MVRAGAVGTHLPTSSLDIFGDLRKMNKR. Residues 29-48 traverse the membrane as a helical; Signal-anchor for type II membrane protein segment; that stretch reads QLYYQVLNFAMIVSSALMIW. The Lumenal segment spans residues 49–192; it reads KGLIVLTGSE…GAYVLLKRES (144 aa). Catalysis depends on charge relay system residues Ser-68, His-108, and Asp-134. The segment at 177–188 is C-terminal short (CTS) helix; that stretch reads ALLAVMGAYVLL.

The protein belongs to the peptidase S26B family. Component of the signal peptidase complex paralog C (SPC-C) composed of a catalytic subunit SEC11C and three accessory subunits SPCS1, SPCS2 and SPCS3. Within the complex, interacts with SPCS2 and SPCS3. The complex induces a local thinning of the ER membrane which is used to measure the length of the signal peptide (SP) h-region of protein substrates. This ensures the selectivity of the complex towards h-regions shorter than 18-20 amino acids. May undergo processing at the N-terminus.

The protein localises to the endoplasmic reticulum membrane. It carries out the reaction Cleavage of hydrophobic, N-terminal signal or leader sequences from secreted and periplasmic proteins.. Catalytic component of the signal peptidase complex (SPC) which catalyzes the cleavage of N-terminal signal sequences from nascent proteins as they are translocated into the lumen of the endoplasmic reticulum. Specifically cleaves N-terminal signal peptides that contain a hydrophobic alpha-helix (h-region) shorter than 18-20 amino acids. The sequence is that of Signal peptidase complex catalytic subunit SEC11C (Sec11c) from Mus musculus (Mouse).